The chain runs to 87 residues: Small ribosomal subunit protein eS21 (87 aa).

It belongs to the eukaryotic ribosomal protein eS21 family. As to quaternary structure, component of the small ribosomal subunit. Mature ribosomes consist of a small (40S) and a large (60S) subunit. The 40S subunit contains about 33 different proteins and 1 molecule of RNA (18S). The 60S subunit contains about 49 different proteins and 3 molecules of RNA (25S, 5.8S and 5S).

It is found in the cytoplasm. In terms of biological role, required for the processing of the 20S rRNA-precursor to mature 18S rRNA in a late step of the maturation of 40S ribosomal subunits. Has a physiological role leading to 18S rRNA stability. This Kluyveromyces lactis (strain ATCC 8585 / CBS 2359 / DSM 70799 / NBRC 1267 / NRRL Y-1140 / WM37) (Yeast) protein is Small ribosomal subunit protein eS21 (RPS21).